We begin with the raw amino-acid sequence, 270 residues long: tRNA pseudouridine synthase A (270 aa).

The active-site Nucleophile is aspartate 51. Tyrosine 109 lines the substrate pocket.

It belongs to the tRNA pseudouridine synthase TruA family. Homodimer.

The enzyme catalyses uridine(38/39/40) in tRNA = pseudouridine(38/39/40) in tRNA. Its function is as follows. Formation of pseudouridine at positions 38, 39 and 40 in the anticodon stem and loop of transfer RNAs. This Burkholderia lata (strain ATCC 17760 / DSM 23089 / LMG 22485 / NCIMB 9086 / R18194 / 383) protein is tRNA pseudouridine synthase A.